Reading from the N-terminus, the 414-residue chain is Glutamyl-tRNA reductase (414 aa).

Substrate contacts are provided by residues 49–52 (TCNR), S108, 113–115 (EPQ), and Q119. C50 serves as the catalytic Nucleophile. 188-193 (GAGQTG) is a binding site for NADP(+).

The protein belongs to the glutamyl-tRNA reductase family. As to quaternary structure, homodimer.

The enzyme catalyses (S)-4-amino-5-oxopentanoate + tRNA(Glu) + NADP(+) = L-glutamyl-tRNA(Glu) + NADPH + H(+). It functions in the pathway porphyrin-containing compound metabolism; protoporphyrin-IX biosynthesis; 5-aminolevulinate from L-glutamyl-tRNA(Glu): step 1/2. Functionally, catalyzes the NADPH-dependent reduction of glutamyl-tRNA(Glu) to glutamate 1-semialdehyde (GSA). This is Glutamyl-tRNA reductase from Francisella philomiragia subsp. philomiragia (strain ATCC 25017 / CCUG 19701 / FSC 153 / O#319-036).